Here is a 298-residue protein sequence, read N- to C-terminus: Mitochondrial basic amino acids transporter (298 aa).

6 helical membrane-spanning segments follow: residues 2 to 22 (ALDFLAGCAGGVAGVLVGHPF), 61 to 81 (GLGSPLLGLTFINALVFGVQG), 96 to 116 (FLAGAAAGAIQCVICCPMELA), 153 to 172 (GMVSTLLRETPSFGVYFLTY), 187 to 207 (LLVPKLLLAGGTSGIASWLST), and 255 to 275 (LLRAFPVNAATFATVTVVLSY). Solcar repeat units lie at residues 2 to 86 (ALDF…TLRA), 90 to 178 (DSPL…LTRA), and 185 to 275 (DRLL…VLSY).

Belongs to the mitochondrial carrier (TC 2.A.29) family.

Its subcellular location is the mitochondrion inner membrane. It carries out the reaction L-lysine(out) + L-arginine(in) = L-lysine(in) + L-arginine(out). The enzyme catalyses L-histidine(out) + L-arginine(in) = L-histidine(in) + L-arginine(out). It catalyses the reaction L-ornithine(in) + L-arginine(out) = L-ornithine(out) + L-arginine(in). The catalysed reaction is L-homoarginine(in) + L-arginine(out) = L-homoarginine(out) + L-arginine(in). It carries out the reaction N(omega)-methyl-L-arginine(in) + L-arginine(out) = N(omega)-methyl-L-arginine(out) + L-arginine(in). The enzyme catalyses L-arginine(in) = L-arginine(out). It catalyses the reaction L-lysine(in) = L-lysine(out). The catalysed reaction is L-ornithine(in) = L-ornithine(out). It carries out the reaction L-histidine(out) = L-histidine(in). Functionally, mitochondrial transporter of arginine, lysine, homoarginine, methylarginine and, to a much lesser extent, ornithine and histidine. Does not transport carnitine nor acylcarnitines. Functions by both counter-exchange and uniport mechanisms. Plays a physiological role in the import of basic amino acids into mitochondria for mitochondrial protein synthesis and amino acid degradation. This chain is Mitochondrial basic amino acids transporter (SLC25A29), found in Bos taurus (Bovine).